The chain runs to 529 residues: Peptide chain release factor 3 (529 aa).

The 270-residue stretch at 10 to 279 (EQRRCFGIIS…ALVEMAPAPG (270 aa)) folds into the tr-type G domain. GTP contacts are provided by residues 19–26 (SHPDAGKT), 87–91 (DTPGH), and 141–144 (NKMD).

It belongs to the TRAFAC class translation factor GTPase superfamily. Classic translation factor GTPase family. PrfC subfamily.

The protein resides in the cytoplasm. Increases the formation of ribosomal termination complexes and stimulates activities of RF-1 and RF-2. It binds guanine nucleotides and has strong preference for UGA stop codons. It may interact directly with the ribosome. The stimulation of RF-1 and RF-2 is significantly reduced by GTP and GDP, but not by GMP. In Desulfatibacillum aliphaticivorans, this protein is Peptide chain release factor 3.